The sequence spans 454 residues: Cobyrinate a,c-diamide synthase (454 aa).

In terms of domain architecture, GATase cobBQ-type spans 244–440 (RLGIAKDKAF…LHVHFYQNPK (197 aa)). Cys326 functions as the Nucleophile in the catalytic mechanism.

This sequence belongs to the CobB/CbiA family. Requires Mg(2+) as cofactor.

It carries out the reaction cob(II)yrinate + 2 L-glutamine + 2 ATP + 2 H2O = cob(II)yrinate a,c diamide + 2 L-glutamate + 2 ADP + 2 phosphate + 2 H(+). It participates in cofactor biosynthesis; adenosylcobalamin biosynthesis; cob(II)yrinate a,c-diamide from sirohydrochlorin (anaerobic route): step 10/10. In terms of biological role, catalyzes the ATP-dependent amidation of the two carboxylate groups at positions a and c of cobyrinate, using either L-glutamine or ammonia as the nitrogen source. This Limosilactobacillus reuteri subsp. reuteri (strain JCM 1112) (Lactobacillus reuteri) protein is Cobyrinate a,c-diamide synthase.